The sequence spans 414 residues: MEQRVQLRVGTMETISNEGDVDREQVLETFGIENETGKETNGSRSFDVGYSSGDTLETLPKASKVDISPADVLKTLFFILVWYTFSTFLTLYNKTLLGDDLGKFPAPLLMNTIHFSIQAVLSKMITWYWSGRFQPDVTISWRDYFVRVVPTALGTAMDINLSNESLVFISVTFATMCKSAAPIFLLLFAFAFRLESPSLKLFGIISVISAGVLLTVAKETEFEFWGFVFVMLAAVMSGFRWCMTQVLLQKETFGLKNPFIFMSCVAPVMAIATGLLSLLLDPWSEFRDNKYFDSGAHFARTCFLMLFGGALAFCMVLTEYVLVSVTSAVTVTIAGVVKEAVTIVVAVFYFHDEFTWLKGVGLMIIMVGVSLFNWYKYDKLQKGHKTEEEKQLQAPSQTGKYVILDEMDDQENSP.

9 consecutive transmembrane segments (helical) span residues 72–92 (VLKT…LTLY), 101–121 (LGKF…QAVL), 172–192 (TFAT…AFAF), 197–217 (PSLK…LTVA), 224–244 (FWGF…WCMT), 259–279 (FIFM…LSLL), 303–323 (FLML…YVLV), 328–348 (AVTV…VAVF), and 354–374 (FTWL…LFNW). One can recognise an EamA domain in the interval 106 to 216 (APLLMNTIHF…VISAGVLLTV (111 aa)).

This sequence belongs to the TPT transporter family. TPT (TC 2.A.7.9) subfamily.

The protein resides in the membrane. The sequence is that of Probable sugar phosphate/phosphate translocator At1g06470 from Arabidopsis thaliana (Mouse-ear cress).